The sequence spans 88 residues: Small ribosomal subunit protein bS20 (88 aa).

Residues M1 to N23 form a disordered region.

Belongs to the bacterial ribosomal protein bS20 family.

In terms of biological role, binds directly to 16S ribosomal RNA. This is Small ribosomal subunit protein bS20 from Mesorhizobium japonicum (strain LMG 29417 / CECT 9101 / MAFF 303099) (Mesorhizobium loti (strain MAFF 303099)).